Here is an 87-residue protein sequence, read N- to C-terminus: Small ribosomal subunit protein uS17 (87 aa).

This sequence belongs to the universal ribosomal protein uS17 family. Part of the 30S ribosomal subunit.

One of the primary rRNA binding proteins, it binds specifically to the 5'-end of 16S ribosomal RNA. The sequence is that of Small ribosomal subunit protein uS17 from Anoxybacillus flavithermus (strain DSM 21510 / WK1).